A 377-amino-acid chain; its full sequence is Guanine nucleotide-binding protein subunit beta-1 (377 aa).

WD repeat units follow at residues 63–93 (GHTGKVYSLDWTPEKNRIVSASQDGRLIVWN), 105–135 (LPCAWVMTCAFSPSGQSVACGGLDSVCSIFN), 154–185 (GHKGYVSSCQYVPDEDTHLITSSGDQTCVLWD), 202–233 (GHTADVQSVSISSSNPRLFVSGSCDTTARLWD), 246–276 (GHEGDVNTVKFFPDGNRFGTGSEDGTCRLFD), 293–323 (GDIPHVTSMAFSISGRLLFVGYSNGDCYVWD), and 339–369 (SHEGRISCLGLSADGSALCTGSWDTNLKIWA).

The protein belongs to the WD repeat G protein beta family. G proteins are composed of 3 units, alpha, beta and gamma.

In terms of biological role, guanine nucleotide-binding proteins (G proteins) are involved as a modulator or transducer in various transmembrane signaling systems. The beta and gamma chains are required for the GTPase activity, for replacement of GDP by GTP, and for G protein-effector interaction. In Nicotiana tabacum (Common tobacco), this protein is Guanine nucleotide-binding protein subunit beta-1.